The chain runs to 99 residues: Nucleoid-associated protein SUB1611 (99 aa).

The protein belongs to the YbaB/EbfC family. As to quaternary structure, homodimer.

Its subcellular location is the cytoplasm. The protein localises to the nucleoid. Functionally, binds to DNA and alters its conformation. May be involved in regulation of gene expression, nucleoid organization and DNA protection. The polypeptide is Nucleoid-associated protein SUB1611 (Streptococcus uberis (strain ATCC BAA-854 / 0140J)).